Here is a 213-residue protein sequence, read N- to C-terminus: Ethylene-responsive transcription factor WIN1 (213 aa).

Positions 15–72 form a DNA-binding region, AP2/ERF; the sequence is KFRGVRQRHWGSWVSEIRHPLLKRRVWLGTFETAEEAARAYDEAAVLMSGRNAKTNFP. Positions 70 to 80 are enriched in polar residues; sequence NFPIQRSSTGE. Disordered stretches follow at residues 70–99 and 159–213; these read NFPI…GSST and ASTD…RFII. Over residues 159 to 174 the composition is skewed to low complexity; that stretch reads ASTDAASQSTSATTAP.

It belongs to the AP2/ERF transcription factor family. ERF subfamily. As to expression, mostly expressed in roots, stems and anthers, and, to a lower extent, in leaves, seeds and silks.

It localises to the nucleus. Functionally, promotes cuticle formation by inducing the expression of enzymes involved in wax biosynthesis, particularly promoting very-long-chain waxes formation. Confers drought resistance. Acts as a transcriptional activator binding directly to promoter regions of CER2, CER3.2 and KCS1, wax biosynthesis-related genes. Binds to the GCC-box pathogenesis-related promoter element. May be involved in the regulation of gene expression by stress factors and by components of stress signal transduction pathways. The protein is Ethylene-responsive transcription factor WIN1 of Zea mays (Maize).